We begin with the raw amino-acid sequence, 131 residues long: uncharacterized protein (131 aa).

Residues 4-44 (QKPEQDVNKKIEELEKKVQELQEQLEKTKQAVKTVASILDN) are a coiled coil.

This is an uncharacterized protein from Sulfolobus islandicus filamentous virus (isolate Iceland/Hveragerdi) (SIFV).